The chain runs to 736 residues: Polyphosphate kinase (736 aa).

N91 provides a ligand contact to ATP. Mg(2+) contacts are provided by R421 and R451. H481 acts as the Phosphohistidine intermediate in catalysis. Residues Y514, R610, and H638 each contribute to the ATP site.

It belongs to the polyphosphate kinase 1 (PPK1) family. It depends on Mg(2+) as a cofactor. In terms of processing, an intermediate of this reaction is the autophosphorylated ppk in which a phosphate is covalently linked to a histidine residue through a N-P bond.

It catalyses the reaction [phosphate](n) + ATP = [phosphate](n+1) + ADP. Catalyzes the reversible transfer of the terminal phosphate of ATP to form a long-chain polyphosphate (polyP). The chain is Polyphosphate kinase from Pseudomonas syringae pv. tomato (strain ATCC BAA-871 / DC3000).